A 295-amino-acid chain; its full sequence is Serpentine receptor class gamma-53 (295 aa).

The next 6 membrane-spanning stretches (helical) occupy residues 7 to 27 (IWLC…VLLS), 39 to 61 (VITM…RMVF), 121 to 141 (FYLL…QLLY), 173 to 193 (CFMS…LYQV), 211 to 230 (MSLI…AWQT), and 241 to 261 (IELL…ILLI).

Belongs to the nematode receptor-like protein srg family.

Its subcellular location is the membrane. The sequence is that of Serpentine receptor class gamma-53 (srg-53) from Caenorhabditis elegans.